We begin with the raw amino-acid sequence, 335 residues long: Beta-hexosaminidase (335 aa).

Residues aspartate 60, arginine 68, arginine 133, and 163–164 (KH) each bind substrate. Histidine 176 functions as the Proton donor/acceptor in the catalytic mechanism. Aspartate 247 acts as the Nucleophile in catalysis.

It belongs to the glycosyl hydrolase 3 family. NagZ subfamily.

It is found in the cytoplasm. It carries out the reaction Hydrolysis of terminal non-reducing N-acetyl-D-hexosamine residues in N-acetyl-beta-D-hexosaminides.. Its pathway is cell wall biogenesis; peptidoglycan recycling. Plays a role in peptidoglycan recycling by cleaving the terminal beta-1,4-linked N-acetylglucosamine (GlcNAc) from peptide-linked peptidoglycan fragments, giving rise to free GlcNAc, anhydro-N-acetylmuramic acid and anhydro-N-acetylmuramic acid-linked peptides. This Stenotrophomonas maltophilia (strain R551-3) protein is Beta-hexosaminidase.